A 216-amino-acid chain; its full sequence is 3-isopropylmalate dehydratase small subunit (216 aa).

It belongs to the LeuD family. LeuD type 1 subfamily. As to quaternary structure, heterodimer of LeuC and LeuD.

The catalysed reaction is (2R,3S)-3-isopropylmalate = (2S)-2-isopropylmalate. The protein operates within amino-acid biosynthesis; L-leucine biosynthesis; L-leucine from 3-methyl-2-oxobutanoate: step 2/4. Its function is as follows. Catalyzes the isomerization between 2-isopropylmalate and 3-isopropylmalate, via the formation of 2-isopropylmaleate. The polypeptide is 3-isopropylmalate dehydratase small subunit (Psychrobacter sp. (strain PRwf-1)).